We begin with the raw amino-acid sequence, 213 residues long: Kynurenine formamidase (213 aa).

Trp20 provides a ligand contact to substrate. The Zn(2+) site is built by His50, His54, and Asp56. The active-site Proton donor/acceptor is His60. His161 and Glu173 together coordinate Zn(2+).

It belongs to the Cyclase 1 superfamily. KynB family. Homodimer. Zn(2+) serves as cofactor.

The enzyme catalyses N-formyl-L-kynurenine + H2O = L-kynurenine + formate + H(+). It functions in the pathway amino-acid degradation; L-tryptophan degradation via kynurenine pathway; L-kynurenine from L-tryptophan: step 2/2. Functionally, catalyzes the hydrolysis of N-formyl-L-kynurenine to L-kynurenine, the second step in the kynurenine pathway of tryptophan degradation. This chain is Kynurenine formamidase, found in Pseudomonas aeruginosa (strain UCBPP-PA14).